A 446-amino-acid polypeptide reads, in one-letter code: Chromosomal replication initiator protein DnaA (446 aa).

Residues 1-92 (MENISDLWNS…SQAEEEIDLP (92 aa)) are domain I, interacts with DnaA modulators. Residues 93–109 (PAKPNAAQDDSNHLPQS) form a domain II region. The segment at 110–326 (MLNPKYTFDT…GALIRVVAYS (217 aa)) is domain III, AAA+ region. G154, G156, K157, and T158 together coordinate ATP. The segment at 327 to 446 (SLINKDINAD…QVEEINDILK (120 aa)) is domain IV, binds dsDNA.

It belongs to the DnaA family. Oligomerizes as a right-handed, spiral filament on DNA at oriC.

It is found in the cytoplasm. In terms of biological role, plays an essential role in the initiation and regulation of chromosomal replication. ATP-DnaA binds to the origin of replication (oriC) to initiate formation of the DNA replication initiation complex once per cell cycle. Binds the DnaA box (a 9 base pair repeat at the origin) and separates the double-stranded (ds)DNA. Forms a right-handed helical filament on oriC DNA; dsDNA binds to the exterior of the filament while single-stranded (ss)DNA is stabiized in the filament's interior. The ATP-DnaA-oriC complex binds and stabilizes one strand of the AT-rich DNA unwinding element (DUE), permitting loading of DNA polymerase. After initiation quickly degrades to an ADP-DnaA complex that is not apt for DNA replication. Binds acidic phospholipids. This chain is Chromosomal replication initiator protein DnaA, found in Bacillus anthracis (strain A0248).